The following is a 215-amino-acid chain: Pyrrolidone-carboxylate peptidase (215 aa).

Residues Glu-80, Cys-143, and His-167 contribute to the active site.

The protein belongs to the peptidase C15 family. As to quaternary structure, homotetramer.

Its subcellular location is the cytoplasm. The catalysed reaction is Release of an N-terminal pyroglutamyl group from a polypeptide, the second amino acid generally not being Pro.. Functionally, removes 5-oxoproline from various penultimate amino acid residues except L-proline. The chain is Pyrrolidone-carboxylate peptidase from Bacillus cereus (strain ZK / E33L).